A 262-amino-acid chain; its full sequence is Acyl-[acyl-carrier-protein]--UDP-N-acetylglucosamine O-acyltransferase (262 aa).

This sequence belongs to the transferase hexapeptide repeat family. LpxA subfamily. In terms of assembly, homotrimer.

The protein localises to the cytoplasm. The enzyme catalyses a (3R)-hydroxyacyl-[ACP] + UDP-N-acetyl-alpha-D-glucosamine = a UDP-3-O-[(3R)-3-hydroxyacyl]-N-acetyl-alpha-D-glucosamine + holo-[ACP]. It functions in the pathway glycolipid biosynthesis; lipid IV(A) biosynthesis; lipid IV(A) from (3R)-3-hydroxytetradecanoyl-[acyl-carrier-protein] and UDP-N-acetyl-alpha-D-glucosamine: step 1/6. Its function is as follows. Involved in the biosynthesis of lipid A, a phosphorylated glycolipid that anchors the lipopolysaccharide to the outer membrane of the cell. The sequence is that of Acyl-[acyl-carrier-protein]--UDP-N-acetylglucosamine O-acyltransferase from Salmonella heidelberg (strain SL476).